A 175-amino-acid polypeptide reads, in one-letter code: Bifunctional protein PyrR (175 aa).

The PRPP-binding signature appears at Val98–Thr110.

Belongs to the purine/pyrimidine phosphoribosyltransferase family. PyrR subfamily. In terms of assembly, homodimer and homohexamer; in equilibrium.

The enzyme catalyses UMP + diphosphate = 5-phospho-alpha-D-ribose 1-diphosphate + uracil. Its function is as follows. Regulates transcriptional attenuation of the pyrimidine nucleotide (pyr) operon by binding in a uridine-dependent manner to specific sites on pyr mRNA. This disrupts an antiterminator hairpin in the RNA and favors formation of a downstream transcription terminator, leading to a reduced expression of downstream genes. In terms of biological role, also displays a weak uracil phosphoribosyltransferase activity which is not physiologically significant. This Staphylococcus aureus (strain bovine RF122 / ET3-1) protein is Bifunctional protein PyrR.